The sequence spans 381 residues: GDP-mannose transporter (381 aa).

A compositionally biased stretch (basic and acidic residues) spans 1–12 (MSDDKKSDDYRV). The tract at residues 1–28 (MSDDKKSDDYRVDMPSSRTSRAPSPIMR) is disordered. The Cytoplasmic portion of the chain corresponds to 1 to 36 (MSDDKKSDDYRVDMPSSRTSRAPSPIMRPALKSAPS). Residues 37 to 57 (LTENPMAAVLAYCASSILMTV) form a helical membrane-spanning segment. Topologically, residues 58–67 (TNKYVLSGVD) are lumenal. Residues 68 to 88 (FNLNFFLLCVQSVVCVTAISI) traverse the membrane as a helical segment. The Cytoplasmic segment spans residues 89–107 (CKAAGLITYRDFNTDEAKK). A helical membrane pass occupies residues 108-126 (WFPISLLLIGMIYTGTWAL). Over 127 to 130 (KYLS) the chain is Lumenal. Residues 131 to 153 (IPVYTIFKNLTIILIAYGEVLWF) traverse the membrane as a helical segment. Over 154 to 161 (GGSVTPMT) the chain is Cytoplasmic. The chain crosses the membrane as a helical span at residues 162 to 184 (LFSFGLMVLSSIIAAWADIQHAL). The Lumenal segment spans residues 185–199 (NSFGQQSEAANEALS). A helical membrane pass occupies residues 200-220 (TMHAGYLWMAFNCVCSATYLL). The Cytoplasmic portion of the chain corresponds to 221–242 (SMRKRIKLTNFKDYDTMYYNNL). A helical transmembrane segment spans residues 243-263 (LTIPILLVASILVEDWSSANI). Over 264–274 (QKNFPPEQRNT) the chain is Lumenal. A helical membrane pass occupies residues 275–295 (VIMVMVISGMSTVFISYTSAW). Over 296-303 (AVRVTSST) the chain is Cytoplasmic. Residues 304–324 (TYSMVGALNKLPIAISGLVFF) traverse the membrane as a helical segment. Over 325-327 (DAP) the chain is Lumenal. Residues 328-348 (VTFGSVSAIFVGFVSGIVYAV) traverse the membrane as a helical segment. The Cytoplasmic portion of the chain corresponds to 349–381 (AKVRQNSKPKTVLPTTNIPLSASSRSMQDSLKA).

The protein belongs to the TPT transporter family. SLC35D subfamily. Homooligomer.

Its subcellular location is the golgi apparatus membrane. It localises to the cytoplasmic vesicle membrane. It is found in the endoplasmic reticulum membrane. Functionally, involved in the import of GDP-mannose from the cytoplasm into the Golgi lumen. The polypeptide is GDP-mannose transporter (VRG4) (Phaeosphaeria nodorum (strain SN15 / ATCC MYA-4574 / FGSC 10173) (Glume blotch fungus)).